The primary structure comprises 387 residues: Phosphoglycerate kinase (387 aa).

Substrate is bound by residues 21 to 23 (DLN), R36, 59 to 62 (HLGR), R113, and R146. ATP is bound by residues K197, E314, and 340–343 (GGDT).

Belongs to the phosphoglycerate kinase family. In terms of assembly, monomer.

It localises to the cytoplasm. It carries out the reaction (2R)-3-phosphoglycerate + ATP = (2R)-3-phospho-glyceroyl phosphate + ADP. It functions in the pathway carbohydrate degradation; glycolysis; pyruvate from D-glyceraldehyde 3-phosphate: step 2/5. This is Phosphoglycerate kinase from Pseudomonas putida (strain ATCC 700007 / DSM 6899 / JCM 31910 / BCRC 17059 / LMG 24140 / F1).